The primary structure comprises 190 residues: RNA-binding protein OPG065 (190 aa).

The region spanning 5-70 (YIDERSDAEI…DIPPRWFMTT (66 aa)) is the Z-binding domain. The DRBM domain maps to 117 to 184 (NPVTIINEYC…AKLAVDKLLG (68 aa)).

The protein belongs to the orthopoxvirus OPG065 family. In terms of assembly, interacts with host G1P2/ISG15. Interacts with host EIF2AK2/PKR. Interacts with host ZBP1.

Functionally, RNA-binding protein that plays a role in the inhibition of multiple cellular antiviral responses activated by double-stranded RNA (dsRNA), such as inhibition of PKR activation, necroptosis, and IFN-mediated antiviral activities. Recognizes and binds Z-RNA structures via its Z-binding domain and dsRNA via its DRBM domain: RNA-binding activity is required to escape host ZBP1-dependent necroptosis. Mechanistically, the Z-binding domain binds Z-RNAs that are produced during vaccinia virus infection, thereby competing with Z-RNA detection by host ZBP1, suppressing ZBP1-dependent necroptosis. Acts as a key inhibitor of the interferon response by blocking the phosphorylation and subsequent activation of IRF3 and IRF7 kinases that are required for interferon-alpha gene expression. Inhibits NF-kappa-B activation and the ubiquitin-like protein ISG15, which is an early antiviral protein. The binding with host ISG15 subsequently blocks host ISGylation. This Homo sapiens (Human) protein is RNA-binding protein OPG065 (OPG065).